Reading from the N-terminus, the 418-residue chain is MRPQATLTVMPVERPLVGRVSPPGSKSITNRALLLAGLAKGTSRLTGALKSDDTRVMSEALRLMGVQVDEPDDSTFVVTSSGHWQAPQQALFLGNAGTATRFLTAALANFEGDFVVDGDEYMRKRPIGPLVDALQRMGVEISAPSGCPPVAIKGKGGLQAGRIEIDGNLSSQYVSALLMAGACGKGSLEVALTGSEIGARGYVDLTLAAMQAFGAEVQAIGDAAWKVSATGYHATDFHIEPDASAATYLWAAQALTEGNIDLGVASDAFTQPDALASQIIDSFPNMPAVIDGSQMQDAIPTLAVLAAFNRQPVRFVGIANLRVKECDRISALCDGLCAIAPGLAVEEGDDLIVHANPALAGTTVNALIDTHSDHRIAMCFALAGLKIKGIHIQDPDCVAKTYPGYWDALASLGVSVQR.

Positions 26, 27, and 31 each coordinate 3-phosphoshikimate. Lys-26 provides a ligand contact to phosphoenolpyruvate. Residues Gly-97 and Arg-125 each coordinate phosphoenolpyruvate. 6 residues coordinate 3-phosphoshikimate: Ser-170, Ser-171, Gln-172, Asp-297, Asn-320, and Lys-324. Gln-172 contributes to the phosphoenolpyruvate binding site. Residue Asp-297 is the Proton acceptor of the active site. Residues Arg-328, Arg-375, and Lys-400 each contribute to the phosphoenolpyruvate site.

Belongs to the EPSP synthase family. In terms of assembly, monomer.

It localises to the cytoplasm. It catalyses the reaction 3-phosphoshikimate + phosphoenolpyruvate = 5-O-(1-carboxyvinyl)-3-phosphoshikimate + phosphate. It functions in the pathway metabolic intermediate biosynthesis; chorismate biosynthesis; chorismate from D-erythrose 4-phosphate and phosphoenolpyruvate: step 6/7. Functionally, catalyzes the transfer of the enolpyruvyl moiety of phosphoenolpyruvate (PEP) to the 5-hydroxyl of shikimate-3-phosphate (S3P) to produce enolpyruvyl shikimate-3-phosphate and inorganic phosphate. This chain is 3-phosphoshikimate 1-carboxyvinyltransferase, found in Pseudomonas syringae pv. tomato (strain ATCC BAA-871 / DC3000).